A 149-amino-acid polypeptide reads, in one-letter code: Transcriptional repressor NrdR (149 aa).

A zinc finger lies at 3–34 (CPFCFAVDTKVIDSRLVGEGSSVRRRRQCLVC). The region spanning 49–139 (PRVVKSNDVR…VYRSFEDIKE (91 aa)) is the ATP-cone domain.

Belongs to the NrdR family. The cofactor is Zn(2+).

Functionally, negatively regulates transcription of bacterial ribonucleotide reductase nrd genes and operons by binding to NrdR-boxes. The sequence is that of Transcriptional repressor NrdR from Escherichia coli O139:H28 (strain E24377A / ETEC).